We begin with the raw amino-acid sequence, 916 residues long: Protein translocase subunit SecA (916 aa).

ATP is bound by residues Q87, G105–T109, and D512. A disordered region spans residues Q857–D916. Positions 900, 902, 911, and 912 each coordinate Zn(2+). Positions K906 to D916 are enriched in basic residues.

The protein belongs to the SecA family. In terms of assembly, monomer and homodimer. Part of the essential Sec protein translocation apparatus which comprises SecA, SecYEG and auxiliary proteins SecDF-YajC and YidC. It depends on Zn(2+) as a cofactor.

Its subcellular location is the cell inner membrane. The protein localises to the cytoplasm. It catalyses the reaction ATP + H2O + cellular proteinSide 1 = ADP + phosphate + cellular proteinSide 2.. Its function is as follows. Part of the Sec protein translocase complex. Interacts with the SecYEG preprotein conducting channel. Has a central role in coupling the hydrolysis of ATP to the transfer of proteins into and across the cell membrane, serving both as a receptor for the preprotein-SecB complex and as an ATP-driven molecular motor driving the stepwise translocation of polypeptide chains across the membrane. This Pseudomonas aeruginosa (strain LESB58) protein is Protein translocase subunit SecA.